Here is a 463-residue protein sequence, read N- to C-terminus: L-seryl-tRNA(Sec) selenium transferase (463 aa).

Residue K295 is modified to N6-(pyridoxal phosphate)lysine.

This sequence belongs to the SelA family. In terms of assembly, homodecamer; pentamer of dimers. Binds only one seryl-tRNA(Sec) per dimer. Pyridoxal 5'-phosphate is required as a cofactor.

The protein resides in the cytoplasm. The catalysed reaction is L-seryl-tRNA(Sec) + selenophosphate + H(+) = L-selenocysteinyl-tRNA(Sec) + phosphate. It participates in aminoacyl-tRNA biosynthesis; selenocysteinyl-tRNA(Sec) biosynthesis; selenocysteinyl-tRNA(Sec) from L-seryl-tRNA(Sec) (bacterial route): step 1/1. Functionally, converts seryl-tRNA(Sec) to selenocysteinyl-tRNA(Sec) required for selenoprotein biosynthesis. The protein is L-seryl-tRNA(Sec) selenium transferase of Salmonella schwarzengrund (strain CVM19633).